The chain runs to 203 residues: Thymidylate kinase (203 aa).

14 to 21 (GGEGIGKS) is a binding site for ATP.

The protein belongs to the thymidylate kinase family.

The enzyme catalyses dTMP + ATP = dTDP + ADP. Phosphorylation of dTMP to form dTDP in both de novo and salvage pathways of dTTP synthesis. The chain is Thymidylate kinase from Rickettsia rickettsii (strain Iowa).